Reading from the N-terminus, the 370-residue chain is Glutamate 5-kinase (370 aa).

Lysine 13 provides a ligand contact to ATP. Residues serine 52, aspartate 139, and asparagine 151 each coordinate substrate. Residues 171–172 and 211–217 each bind ATP; these read SD and SGGMKSK. The 79-residue stretch at 275–353 folds into the PUA domain; sequence KGELVLDRGA…AEIEAVLGYR (79 aa).

Belongs to the glutamate 5-kinase family.

It localises to the cytoplasm. It catalyses the reaction L-glutamate + ATP = L-glutamyl 5-phosphate + ADP. Its pathway is amino-acid biosynthesis; L-proline biosynthesis; L-glutamate 5-semialdehyde from L-glutamate: step 1/2. Functionally, catalyzes the transfer of a phosphate group to glutamate to form L-glutamate 5-phosphate. The sequence is that of Glutamate 5-kinase from Thermus thermophilus (strain ATCC BAA-163 / DSM 7039 / HB27).